A 717-amino-acid chain; its full sequence is Amino-acid acetyltransferase, mitochondrial (717 aa).

The transit peptide at 1–23 (MFIWTKAPARGLGKASKILPKRD) directs the protein to the mitochondrion. Residues 35-70 (KQFHTATTSVRRSSSSAKERQRAERQQLTRLLKESP) are disordered. Residues 39-50 (TATTSVRRSSSS) are compositionally biased toward low complexity. A compositionally biased stretch (basic and acidic residues) spans 51-70 (AKERQRAERQQLTRLLKESP). The N-acetyltransferase domain maps to 518–691 (NPSIELADDP…GDVDDAKKRD (174 aa)).

This sequence belongs to the acetyltransferase family.

It localises to the mitochondrion. The enzyme catalyses L-glutamate + acetyl-CoA = N-acetyl-L-glutamate + CoA + H(+). It functions in the pathway amino-acid biosynthesis; L-arginine biosynthesis; N(2)-acetyl-L-ornithine from L-glutamate: step 1/4. In terms of biological role, N-acetylglutamate synthase involved in arginine biosynthesis. In Pyrenophora tritici-repentis (strain Pt-1C-BFP) (Wheat tan spot fungus), this protein is Amino-acid acetyltransferase, mitochondrial (arg2).